Reading from the N-terminus, the 450-residue chain is MPSPLGPPCLPVMDPETTLEEPETARLRFRGFCYQEVAGPREALARLRELCCQWLQPEAHSKEQMLEMLVLEQFLGTLPPEIQAWVRGQRPGSPEEAAALVEGLQHDPGQLLGWITAHVLKQEVLPAAQKTEEPLGSPHPSGTVESPGEGPQDTRIEGSVQLSCSVKEEPNVDGQEVAPSSPPLAAQSPEGNHGHQEPASTSFHPPRIQEEWGLLDRSQKELYWDAMLEKYGTVVSLGLPPHQPEAQAQSELGMLLTGTGVCRSLRSGNESEGPPGCPEAQPPQGPGPAAWEGLSGAATPAPTVRPGTPPVPTQPTPAETRLEPAATPRKPYTCEQCGRGFDWKSVFVIHHRTHTSGPGVQSPGLATGESTEKPPQGEVAFPHHPRRSLTGPRSYPCEECGCSFSWKSQLVIHRKSHTGQRRHFCSDCGRAFDWKSQLVIHRKGHRPEVP.

Positions 26-108 (RLRFRGFCYQ…ALVEGLQHDP (83 aa)) constitute an SCAN box domain. Lysine 130 participates in a covalent cross-link: Glycyl lysine isopeptide (Lys-Gly) (interchain with G-Cter in SUMO2). Disordered regions lie at residues 130–155 (KTEE…QDTR) and 168–205 (EEPN…SFHP). Serine 137 is modified (phosphoserine). Residues 208 to 254 (IQEEWGLLDRSQKELYWDAMLEKYGTVVSLGLPPHQPEAQAQSELGM) enclose the KRAB domain. At serine 218 the chain carries Phosphoserine. Disordered regions lie at residues 263 to 331 (RSLR…PRKP) and 354 to 389 (HTSG…RRSL). Positions 275–286 (PGCPEAQPPQGP) are enriched in pro residues. Low complexity predominate over residues 287-306 (GPAAWEGLSGAATPAPTVRP). Residue threonine 308 is modified to Phosphothreonine. Lysine 330 participates in a covalent cross-link: Glycyl lysine isopeptide (Lys-Gly) (interchain with G-Cter in SUMO2). 3 consecutive C2H2-type zinc fingers follow at residues 332–359 (YTCE…SGPG), 395–422 (YPCE…GQRR), and 423–450 (HFCS…PEVP).

It belongs to the krueppel C2H2-type zinc-finger protein family.

The protein localises to the nucleus. In terms of biological role, may be involved in transcriptional regulation. The chain is Zinc finger protein 446 (ZNF446) from Homo sapiens (Human).